A 129-amino-acid polypeptide reads, in one-letter code: Small ribosomal subunit protein uS11 (129 aa).

Belongs to the universal ribosomal protein uS11 family. In terms of assembly, part of the 30S ribosomal subunit. Interacts with proteins S7 and S18. Binds to IF-3.

Located on the platform of the 30S subunit, it bridges several disparate RNA helices of the 16S rRNA. Forms part of the Shine-Dalgarno cleft in the 70S ribosome. This is Small ribosomal subunit protein uS11 from Bacillus cytotoxicus (strain DSM 22905 / CIP 110041 / 391-98 / NVH 391-98).